Consider the following 151-residue polypeptide: Putative truncated GMC-type inactive oxidoreductase L893 (151 aa).

This sequence belongs to the GMC oxidoreductase family.

It is found in the virion. This Acanthamoeba polyphaga (Amoeba) protein is Putative truncated GMC-type inactive oxidoreductase L893.